A 370-amino-acid chain; its full sequence is Maturase K (370 aa).

It belongs to the intron maturase 2 family. MatK subfamily.

The protein resides in the plastid. The protein localises to the chloroplast. In terms of biological role, usually encoded in the trnK tRNA gene intron. Probably assists in splicing its own and other chloroplast group II introns. The protein is Maturase K of Marchantia polymorpha (Common liverwort).